Reading from the N-terminus, the 260-residue chain is 5-oxoprolinase subunit A (260 aa).

Belongs to the LamB/PxpA family. In terms of assembly, forms a complex composed of PxpA, PxpB and PxpC.

It carries out the reaction 5-oxo-L-proline + ATP + 2 H2O = L-glutamate + ADP + phosphate + H(+). Its function is as follows. Catalyzes the cleavage of 5-oxoproline to form L-glutamate coupled to the hydrolysis of ATP to ADP and inorganic phosphate. This is 5-oxoprolinase subunit A from Methylococcus capsulatus (strain ATCC 33009 / NCIMB 11132 / Bath).